An 850-amino-acid polypeptide reads, in one-letter code: Transforming growth factor beta receptor type 3 (850 aa).

Positions 1–22 (MAVTSHHMVPVFVLMSACLATA) are cleaved as a signal peptide. The Extracellular segment spans residues 23-785 (GPEPSTRCEL…QIFHGLDTLT (763 aa)). An intrachain disulfide couples Cys54 to Cys199. Asn143 and Asn491 each carry an N-linked (GlcNAc...) asparagine glycan. Residues 454-728 (KCDNEKMVVA…PKCVTPDDAC (275 aa)) enclose the ZP domain. The tract at residues 528 to 557 (SPGDSSGWPDGYEDLESGDNGFPGDTDEGE) is disordered. 2 O-linked (Xyl...) (glycosaminoglycan) serine glycosylation sites follow: Ser533 and Ser544. N-linked (GlcNAc...) asparagine glycans are attached at residues Asn570, Asn589, and Asn696. 3 cysteine pairs are disulfide-bonded: Cys638–Cys704, Cys659–Cys728, and Cys709–Cys721. Residues 735-749 (MIWTMMQNKKTFTKP) are interaction with TGF-beta ligand. A helical membrane pass occupies residues 786–808 (VMGIAFAAFVIGALLTGALWYIY). Residues 809-850 (SHTGETARRQQVPTSPPASENSSAAHSIGSTQSTPCSSSSTA) are Cytoplasmic-facing. Positions 817 to 833 (RQQVPTSPPASENSSAA) are enriched in polar residues. The disordered stretch occupies residues 817–850 (RQQVPTSPPASENSSAAHSIGSTQSTPCSSSSTA). The span at 835–850 (SIGSTQSTPCSSSSTA) shows a compositional bias: low complexity. Thr839 carries the phosphothreonine modification.

As to quaternary structure, forms homodimers and homooligomers. Interacts with DYNLT4. Interacts with integrin ITGA5:ITGB1; this interaction promotes the internalization and trafficking of ITGA5:ITGB1 into endocytic vesicles. Interacts with TGFB1, BMP2, BMP5, BMP7 or GDF5 and inhibin A via the ligand binding domains. Interacts with ALK3/BMPR1A; this interaction results in the cell surface retention of BMPR1A. Interacts with ALK6/BMPR1B; this interaction enhances BMPR1B-mediated stimulation of the BMP signaling pathway. Interacts with the scaffolding protein beta-arrestin2/ARRB2; this interaction mediates internalization of TGFBR3 and thus regulates migration, actin cytoskeleton and activation of CDC42. In terms of processing, extensively modified by glycosaminoglycan groups (GAG). Phosphorylated in the cytoplasmic domain by the type II receptor TGFBR2 at THR-839 to mediate recruitment of ARRB2 and subsequent internalization of TGFBR2 and TGFBR3.

It localises to the cell membrane. The protein localises to the secreted. The protein resides in the extracellular space. Its subcellular location is the extracellular matrix. Functionally, cell surface receptor that regulates diverse cellular processes including cell proliferation, differentiation, migration, and apoptosis. Initiates BMP, inhibin, and TGF-beta signaling pathways by interacting with different ligands including TGFB1, BMP2, BMP5, BMP7 or GDF5. Alternatively, acts as a cell surface coreceptor for BMP ligands, serving to enhance ligand binding by differentially regulating BMPR1A/ALK3 and BMPR1B/ALK6 receptor trafficking. Promotes epithelial cell adhesion, focal adhesion formation and integrin signaling during epithelial cell spreading on fibronectin. By interacting with the scaffolding protein beta-arrestin2/ARRB2, regulates migration or actin cytoskeleton and promotes the activation of CDC42 as well as the inhibition of NF-kappa-B. In gonadotrope cells, acts as an inhibin A coreceptor and regulates follicle-stimulating hormone (FSH) levels and female fertility. Plays a role in the inhibition of directed and random cell migration in epithelial cells by altering the actin cytoskeletal organization. Participates in epithelial-mesenchymal transformation (EMT) upon binding to BMP2 or TGFB2, by activating the PAR6/SMURF1/RHOA pathway. The polypeptide is Transforming growth factor beta receptor type 3 (Tgfbr3) (Mus musculus (Mouse)).